We begin with the raw amino-acid sequence, 229 residues long: Putative N-acetylmannosamine-6-phosphate 2-epimerase (229 aa).

This sequence belongs to the NanE family.

It carries out the reaction an N-acyl-D-glucosamine 6-phosphate = an N-acyl-D-mannosamine 6-phosphate. Its pathway is amino-sugar metabolism; N-acetylneuraminate degradation; D-fructose 6-phosphate from N-acetylneuraminate: step 3/5. In terms of biological role, converts N-acetylmannosamine-6-phosphate (ManNAc-6-P) to N-acetylglucosamine-6-phosphate (GlcNAc-6-P). In Shigella dysenteriae serotype 1 (strain Sd197), this protein is Putative N-acetylmannosamine-6-phosphate 2-epimerase.